A 454-amino-acid chain; its full sequence is UDP-N-acetylmuramoylalanine--D-glutamate ligase (454 aa).

115–121 contacts ATP; sequence GTNGKTT.

It belongs to the MurCDEF family.

The protein resides in the cytoplasm. The enzyme catalyses UDP-N-acetyl-alpha-D-muramoyl-L-alanine + D-glutamate + ATP = UDP-N-acetyl-alpha-D-muramoyl-L-alanyl-D-glutamate + ADP + phosphate + H(+). Its pathway is cell wall biogenesis; peptidoglycan biosynthesis. In terms of biological role, cell wall formation. Catalyzes the addition of glutamate to the nucleotide precursor UDP-N-acetylmuramoyl-L-alanine (UMA). This chain is UDP-N-acetylmuramoylalanine--D-glutamate ligase, found in Thermoanaerobacter pseudethanolicus (strain ATCC 33223 / 39E) (Clostridium thermohydrosulfuricum).